We begin with the raw amino-acid sequence, 130 residues long: Small ribosomal subunit protein uS9 (130 aa).

The segment at 109 to 130 (RKKERKKYGQPGARAKFQYSKR) is disordered.

Belongs to the universal ribosomal protein uS9 family.

The polypeptide is Small ribosomal subunit protein uS9 (Maridesulfovibrio salexigens (strain ATCC 14822 / DSM 2638 / NCIMB 8403 / VKM B-1763) (Desulfovibrio salexigens)).